Here is a 340-residue protein sequence, read N- to C-terminus: Methionine import ATP-binding protein MetN 2 (340 aa).

The ABC transporter domain maps to 2–241 (ITLQNVVKEY…PQEKVTQRFV (240 aa)). 38-45 (GYSGAGKS) is a binding site for ATP.

The protein belongs to the ABC transporter superfamily. Methionine importer (TC 3.A.1.24) family. The complex is composed of two ATP-binding proteins (MetN), two transmembrane proteins (MetI) and a solute-binding protein (MetQ).

It is found in the cell membrane. The catalysed reaction is L-methionine(out) + ATP + H2O = L-methionine(in) + ADP + phosphate + H(+). The enzyme catalyses D-methionine(out) + ATP + H2O = D-methionine(in) + ADP + phosphate + H(+). Its function is as follows. Part of the ABC transporter complex MetNIQ involved in methionine import. Responsible for energy coupling to the transport system. This chain is Methionine import ATP-binding protein MetN 2, found in Listeria monocytogenes serotype 4b (strain F2365).